A 190-amino-acid chain; its full sequence is MATTSDFRNGLCIEFNNDLYTIVEFQHVKPGKGGAFVRTKLKSLTNGKVIDNTFNSGVKITTARIERKTYQFLYKDGAGYHLMDNNTFEQLDLDEKAIQNPLLIKEGQELDVLFHQETGNFIGCELPPFVELKVTYTEPGLKGDTATRALKPATLETGLQIQVPLFIDNDEIIKIDTRTIAYVERVKTDI.

It belongs to the elongation factor P family.

It is found in the cytoplasm. It participates in protein biosynthesis; polypeptide chain elongation. In terms of biological role, involved in peptide bond synthesis. Stimulates efficient translation and peptide-bond synthesis on native or reconstituted 70S ribosomes in vitro. Probably functions indirectly by altering the affinity of the ribosome for aminoacyl-tRNA, thus increasing their reactivity as acceptors for peptidyl transferase. This Amoebophilus asiaticus (strain 5a2) protein is Elongation factor P.